The sequence spans 415 residues: Alpha-2Db adrenergic receptor (415 aa).

The Extracellular segment spans residues 1–33 (MDLSTITFLLPNSSEDTNGTSAPRLPPHSQCAS). N12 and N18 each carry an N-linked (GlcNAc...) asparagine glycan. A helical membrane pass occupies residues 34–58 (VLIVLVVTVIILVTIVGNVLVVVAV). The Cytoplasmic portion of the chain corresponds to 59–70 (FTSRALRAPQNL). Residues 71–96 (FLVSLAAADILVATLVIPFSLANEVM) traverse the membrane as a helical segment. Topologically, residues 97–106 (GYWYLGSTWC) are extracellular. C106 and C179 form a disulfide bridge. The helical transmembrane segment at 107 to 129 (AFYLALDVLFCTSSIVHLCAISL) threads the bilayer. Residues 130 to 150 (DRYWSVTKAVSYNLKRTPRRI) lie on the Cytoplasmic side of the membrane. Residues 151–173 (KIMITVVWVISAVISFPPLLMTK) traverse the membrane as a helical segment. The Extracellular segment spans residues 174–184 (HDELECLLNNE). N183 carries N-linked (GlcNAc...) asparagine glycosylation. The helical transmembrane segment at 185-208 (TWYILSSCIVSFFAPGLIMILVYC) threads the bilayer. The Cytoplasmic segment spans residues 209–339 (RIYRVAKQRA…QMREKRFTFV (131 aa)). Positions 234–299 (QSETCFVRKG…EGAQSCPKPN (66 aa)) are disordered. The segment covering 276-286 (NRHRNSRFAKS) has biased composition (basic residues). A helical membrane pass occupies residues 340 to 363 (LAVVMGVFVLCWFPFFFTYSLHAI). The Extracellular portion of the chain corresponds to 364–376 (CRKSCTIPDSLFN). Residues 377 to 397 (LFFWIGYCNSSVNPIIYTIFN) form a helical membrane-spanning segment. Topologically, residues 398–415 (RDFRKAFKKIMCRHSTRT) are cytoplasmic.

Belongs to the G-protein coupled receptor 1 family. Adrenergic receptor subfamily. ADRA2D sub-subfamily.

It localises to the cell membrane. Functionally, alpha-2 adrenergic receptors mediate the catecholamine-induced inhibition of adenylate cyclase through the action of G proteins. The order of potency for this receptor is dexmedetomidine &gt; norepinephrine = epinephrine &gt; oxymetazoline. This is Alpha-2Db adrenergic receptor (adra2db) from Danio rerio (Zebrafish).